Reading from the N-terminus, the 74-residue chain is Ferredoxin MycCII (74 aa).

The 4Fe-4S ferredoxin-type domain occupies 1–29 (MRIVLDAERCVGAGQCEATAPELFTQGDD). [3Fe-4S] cluster contacts are provided by Cys10, Cys16, and Cys54.

[3Fe-4S] cluster is required as a cofactor.

It participates in antibiotic biosynthesis; mycinamicin biosynthesis. Functionally, specific electron transport protein capable of effectively supporting cytochrome P450 MycCI activity in the biosynthesis of mycinamicin, a 16-membered macrolide antibiotic. The chain is Ferredoxin MycCII from Micromonospora griseorubida.